The following is a 194-amino-acid chain: Adenylate kinase (194 aa).

11–16 (GSGKGT) is a binding site for ATP. Residues 31 to 60 (STGELLRAEIKAQTELGQAAAGYINEGHLV) form an NMP region. AMP is bound by residues Thr-32, Arg-37, 58 to 60 (HLV), 86 to 89 (GFPR), and Gln-93. Residues 127–137 (NRGKISGRSDD) are LID. An ATP-binding site is contributed by Arg-128. Arg-134 and Arg-145 together coordinate AMP. ATP is bound at residue Gly-173.

This sequence belongs to the adenylate kinase family. Monomer.

It is found in the cytoplasm. It carries out the reaction AMP + ATP = 2 ADP. It participates in purine metabolism; AMP biosynthesis via salvage pathway; AMP from ADP: step 1/1. In terms of biological role, catalyzes the reversible transfer of the terminal phosphate group between ATP and AMP. Plays an important role in cellular energy homeostasis and in adenine nucleotide metabolism. The protein is Adenylate kinase of Porphyromonas gingivalis (strain ATCC 33277 / DSM 20709 / CIP 103683 / JCM 12257 / NCTC 11834 / 2561).